The primary structure comprises 379 residues: RIB43A-like with coiled-coils protein 1 (379 aa).

2 coiled-coil regions span residues 43–111 (EALN…RCEL) and 285–337 (IRKV…EFRR).

This sequence belongs to the RIB43A family. As to quaternary structure, microtubule inner protein component of sperm flagellar doublet microtubules.

Its subcellular location is the cytoplasm. It is found in the cytoskeleton. The protein localises to the flagellum axoneme. In Bos taurus (Bovine), this protein is RIB43A-like with coiled-coils protein 1 (RIBC1).